Reading from the N-terminus, the 292-residue chain is UDP-3-O-acyl-N-acetylglucosamine deacetylase (292 aa).

Residues H75, H231, and D235 each coordinate Zn(2+). H258 serves as the catalytic Proton donor.

Belongs to the LpxC family. Zn(2+) serves as cofactor.

The enzyme catalyses a UDP-3-O-[(3R)-3-hydroxyacyl]-N-acetyl-alpha-D-glucosamine + H2O = a UDP-3-O-[(3R)-3-hydroxyacyl]-alpha-D-glucosamine + acetate. The protein operates within glycolipid biosynthesis; lipid IV(A) biosynthesis; lipid IV(A) from (3R)-3-hydroxytetradecanoyl-[acyl-carrier-protein] and UDP-N-acetyl-alpha-D-glucosamine: step 2/6. Functionally, catalyzes the hydrolysis of UDP-3-O-myristoyl-N-acetylglucosamine to form UDP-3-O-myristoylglucosamine and acetate, the committed step in lipid A biosynthesis. The chain is UDP-3-O-acyl-N-acetylglucosamine deacetylase from Nautilia profundicola (strain ATCC BAA-1463 / DSM 18972 / AmH).